Consider the following 178-residue polypeptide: MFLKVQLPWNVMIPAENMDAKGLMLKRAILVELLEAFASKKATKELGYYVAVTTLDKIGEGKIREHTGEVLFPVMFSGMTFKIFKGEIIHGVVHKVLKHGVFMRCGPIENVYLSYTKMPDYKYIPGENPIFMNEKTSRIQVETTVRVVVIGIKWMEVEREFQALASLEGDYLGPLSEE.

It belongs to the eukaryotic RPB7/RPC8 RNA polymerase subunit family. In terms of assembly, component of the RNA polymerase V complex.

Its subcellular location is the nucleus. Its function is as follows. DNA-dependent RNA polymerase catalyzes the transcription of DNA into RNA using the four ribonucleoside triphosphates as substrates. Component of RNA polymerase V involved in RNA-directed DNA methylation-dependent (RdDM) silencing of endogenous repeated sequences, including transposable elements. The polypeptide is DNA-directed RNA polymerase V subunit 7 (NRPE7) (Arabidopsis thaliana (Mouse-ear cress)).